The following is a 484-amino-acid chain: UDP-N-acetylmuramate--L-alanine ligase (484 aa).

An ATP-binding site is contributed by 122–128 (GTHGKTT).

Belongs to the MurCDEF family.

It localises to the cytoplasm. The catalysed reaction is UDP-N-acetyl-alpha-D-muramate + L-alanine + ATP = UDP-N-acetyl-alpha-D-muramoyl-L-alanine + ADP + phosphate + H(+). It participates in cell wall biogenesis; peptidoglycan biosynthesis. Its function is as follows. Cell wall formation. This chain is UDP-N-acetylmuramate--L-alanine ligase, found in Mycobacterium sp. (strain JLS).